The chain runs to 204 residues: Somatotropin (204 aa).

An N-terminal signal peptide occupies residues 1-17 (MNSVVLLLSVVCLGVSS). Gln-18 is modified (pyrrolidone carboxylic acid). His-36 lines the Zn(2+) pocket. Cysteines 69 and 177 form a disulfide. Glu-186 lines the Zn(2+) pocket. Residues Cys-194 and Cys-202 are joined by a disulfide bond.

The protein belongs to the somatotropin/prolactin family.

The protein localises to the secreted. Its function is as follows. Growth hormone plays an important role in growth control and involved in the regulation of several anabolic processes. The protein is Somatotropin (gh) of Oreochromis niloticus (Nile tilapia).